The sequence spans 457 residues: Siroheme synthase (457 aa).

The interval 1–204 (MDHLPIFCQL…ADEKAVNATT (204 aa)) is precorrin-2 dehydrogenase /sirohydrochlorin ferrochelatase. NAD(+) contacts are provided by residues 22–23 (DV) and 43–44 (LT). Serine 128 bears the Phosphoserine mark. A uroporphyrinogen-III C-methyltransferase region spans residues 216–457 (GEVVLVGAGP…RDKLNWFSNY (242 aa)). Residue proline 225 coordinates S-adenosyl-L-methionine. Catalysis depends on aspartate 248, which acts as the Proton acceptor. The active-site Proton donor is lysine 270. S-adenosyl-L-methionine is bound by residues 301-303 (GGD), isoleucine 306, 331-332 (TA), methionine 382, and glycine 411.

It in the N-terminal section; belongs to the precorrin-2 dehydrogenase / sirohydrochlorin ferrochelatase family. The protein in the C-terminal section; belongs to the precorrin methyltransferase family.

The catalysed reaction is uroporphyrinogen III + 2 S-adenosyl-L-methionine = precorrin-2 + 2 S-adenosyl-L-homocysteine + H(+). The enzyme catalyses precorrin-2 + NAD(+) = sirohydrochlorin + NADH + 2 H(+). It catalyses the reaction siroheme + 2 H(+) = sirohydrochlorin + Fe(2+). It participates in cofactor biosynthesis; adenosylcobalamin biosynthesis; precorrin-2 from uroporphyrinogen III: step 1/1. The protein operates within cofactor biosynthesis; adenosylcobalamin biosynthesis; sirohydrochlorin from precorrin-2: step 1/1. Its pathway is porphyrin-containing compound metabolism; siroheme biosynthesis; precorrin-2 from uroporphyrinogen III: step 1/1. It functions in the pathway porphyrin-containing compound metabolism; siroheme biosynthesis; siroheme from sirohydrochlorin: step 1/1. It participates in porphyrin-containing compound metabolism; siroheme biosynthesis; sirohydrochlorin from precorrin-2: step 1/1. Its function is as follows. Multifunctional enzyme that catalyzes the SAM-dependent methylations of uroporphyrinogen III at position C-2 and C-7 to form precorrin-2 via precorrin-1. Then it catalyzes the NAD-dependent ring dehydrogenation of precorrin-2 to yield sirohydrochlorin. Finally, it catalyzes the ferrochelation of sirohydrochlorin to yield siroheme. The chain is Siroheme synthase from Salmonella gallinarum (strain 287/91 / NCTC 13346).